Consider the following 532-residue polypeptide: MRSVSYVQRVALEFSGSLFPHAICLGDVDNDTLNELVVGDTSGKLSVYKNDDSRPWLTCSCQGMLTCVGVGDVCNKGKNLVVAVSAEGWFHLCDLTPAKSLDGSGHHETLGGEEQRPVFKQHIPANTKVMLISDIDGDGRCELVVGYTDRVVRAFRWEDLGEGAEHPMGQLVLLKKWMLEGQVDSLSVTPGPLGVPELMVSQPGCAYAILLCTWNKDPGATPTSEGPMEGHSGAPGCPGRCVAPDLWPHPQQERLHSPHRQHQASHSPDSSASGLFALCTLDGTLKLMEEADRLLWSVQVDHQLFALEKLDVTGNGHEEVVACAWDGQTYIIDHNRTVVRFQVDENIRAFCAGLYACKDSRNSPCLVYVTFNQKIYVYWEVQLERMESTNLLKVLEAQPSSGSCWESWAWILMSCPPPAPCFTKPSTIQTSLHSAPPRAPRTPPSWTGFLAEQGAFCTSPPPPPPQLSGIWKTGSAHYWGRMAAPLGCGDCRPPGRLGEGRDKLPLCPFPCVPHLSRQQALPLPRAPYSCCL.

An FG-GAP 1; atypical repeat occupies 19 to 48; sequence FPHAICLGDVDNDTLNELVVGDTSGKLSVY. S104 is subject to Phosphoserine. One copy of the FG-GAP 2; atypical repeat lies at 126–155; it reads NTKVMLISDIDGDGRCELVVGYTDRVVRAF. Positions 248–271 are disordered; it reads PHPQQERLHSPHRQHQASHSPDSS.

In terms of assembly, part of the KICSTOR complex composed of KPTN, ITFG2, KICS2 and SZT2. SZT2 probably serves as a link between the other three proteins in the KICSTOR complex and may mediate the direct interaction with the GATOR complex via GATOR1. The KICSTOR complex interacts directly with the GATOR1 complex and most probably indirectly with the GATOR2 complex in an amino acid-independent manner.

It localises to the lysosome membrane. Its function is as follows. As part of the KICSTOR complex functions in the amino acid-sensing branch of the TORC1 signaling pathway. Recruits, in an amino acid-independent manner, the GATOR1 complex to the lysosomal membranes and allows its interaction with GATOR2 and the RAG GTPases. Functions upstream of the RAG GTPases and is required to negatively regulate mTORC1 signaling in absence of amino acids. In absence of the KICSTOR complex mTORC1 is constitutively localized to the lysosome and activated. The KICSTOR complex is also probably involved in the regulation of mTORC1 by glucose. The chain is KICSTOR complex protein ITFG2 from Bos taurus (Bovine).